The chain runs to 486 residues: Iron-sulfur cluster assembly SufBD family protein ycf24 (486 aa).

This sequence belongs to the iron-sulfur cluster assembly SufBD family.

Its subcellular location is the plastid. It is found in the chloroplast. This is Iron-sulfur cluster assembly SufBD family protein ycf24 (ycf24) from Trieres chinensis (Marine centric diatom).